The chain runs to 33 residues: Protamine-M6/M7 (33 aa).

The tract at residues Pro-1–Arg-33 is disordered.

Testis.

It localises to the nucleus. The protein resides in the chromosome. Functionally, protamines substitute for histones in the chromatin of sperm during the haploid phase of spermatogenesis. They compact sperm DNA into a highly condensed, stable and inactive complex. The polypeptide is Protamine-M6/M7 (Mugil cephalus (Flathead mullet)).